A 307-amino-acid polypeptide reads, in one-letter code: Ribosomal protein L11 methyltransferase (307 aa).

Residues Thr-156, Gly-177, Asp-199, and Asn-243 each coordinate S-adenosyl-L-methionine.

It belongs to the methyltransferase superfamily. PrmA family.

It localises to the cytoplasm. It catalyses the reaction L-lysyl-[protein] + 3 S-adenosyl-L-methionine = N(6),N(6),N(6)-trimethyl-L-lysyl-[protein] + 3 S-adenosyl-L-homocysteine + 3 H(+). In terms of biological role, methylates ribosomal protein L11. The sequence is that of Ribosomal protein L11 methyltransferase from Syntrophomonas wolfei subsp. wolfei (strain DSM 2245B / Goettingen).